We begin with the raw amino-acid sequence, 67 residues long: Photosystem II reaction center protein H (67 aa).

A helical transmembrane segment spans residues 27–47 (GAVPVMAFIGVLLLVFLVILL).

It belongs to the PsbH family. In terms of assembly, PSII is composed of 1 copy each of membrane proteins PsbA, PsbB, PsbC, PsbD, PsbE, PsbF, PsbH, PsbI, PsbJ, PsbK, PsbL, PsbM, PsbT, PsbX, PsbY, Psb30/Ycf12, peripheral proteins PsbO, CyanoQ (PsbQ), PsbU, PsbV and a large number of cofactors. It forms dimeric complexes.

Its subcellular location is the cellular thylakoid membrane. Its function is as follows. One of the components of the core complex of photosystem II (PSII), required for its stability and/or assembly. PSII is a light-driven water:plastoquinone oxidoreductase that uses light energy to abstract electrons from H(2)O, generating O(2) and a proton gradient subsequently used for ATP formation. It consists of a core antenna complex that captures photons, and an electron transfer chain that converts photonic excitation into a charge separation. The sequence is that of Photosystem II reaction center protein H from Prochlorococcus marinus (strain MIT 9211).